A 194-amino-acid polypeptide reads, in one-letter code: CMRF35-like molecule 5 (194 aa).

An N-terminal signal peptide occupies residues 1–18 (MWLSPSLLLLILPGYSIA). The Ig-like V-type domain maps to 19–125 (AKITGPTTVN…LGVKVQVTIN (107 aa)). The Extracellular portion of the chain corresponds to 19–165 (AKITGPTTVN…LTRSPLKSTH (147 aa)). Residue asparagine 28 is glycosylated (N-linked (GlcNAc...) asparagine). The cysteines at positions 39 and 107 are disulfide-linked. The helical transmembrane segment at 166-186 (FLFLFLLELPLLLSMLGTVLW) threads the bilayer. Over 187–194 (VNRPQRRS) the chain is Cytoplasmic.

It belongs to the CD300 family. In terms of assembly, forms complexes with the CD300 family members with exception of CD300c. In terms of processing, N-glycosylated. Expression seems restricted to cells of myeloid lineage.

The protein resides in the cell membrane. The chain is CMRF35-like molecule 5 (CD300LD) from Homo sapiens (Human).